A 775-amino-acid polypeptide reads, in one-letter code: ATP-dependent 6-phosphofructokinase 2 (775 aa).

The N-terminal catalytic PFK domain 1 stretch occupies residues 1–390 (MTNTILDTYS…YHSAYRHLNT (390 aa)). ATP-binding positions include G25, 88-89 (RC), and 118-121 (GDGS). Position 119 (D119) interacts with Mg(2+). Substrate contacts are provided by residues 164 to 166 (SID), R201, 208 to 210 (MGR), E264, R292, and 298 to 301 (HIQR). D166 (proton acceptor) is an active-site residue. Positions 391 to 404 (SDHPKMVLPEDKRM) are interdomain linker. The interval 405–775 (RVAIIHVGAP…GRSSLYAIPN (371 aa)) is C-terminal regulatory PFK domain 2. Beta-D-fructose 2,6-bisphosphate is bound by residues 537-541 (SMSNN), 582-584 (QGA), D640, and 672-675 (HFQQ).

It belongs to the phosphofructokinase type A (PFKA) family. ATP-dependent PFK group I subfamily. Eukaryotic two domain clade 'E' sub-subfamily. In terms of assembly, homotetramer. It depends on Mg(2+) as a cofactor.

The protein resides in the cytoplasm. The catalysed reaction is beta-D-fructose 6-phosphate + ATP = beta-D-fructose 1,6-bisphosphate + ADP + H(+). It functions in the pathway carbohydrate degradation; glycolysis; D-glyceraldehyde 3-phosphate and glycerone phosphate from D-glucose: step 3/4. Its activity is regulated as follows. Allosterically activated by ADP, AMP, or fructose 2,6-bisphosphate, and allosterically inhibited by ATP or citrate. Functionally, catalyzes the phosphorylation of D-fructose 6-phosphate to fructose 1,6-bisphosphate by ATP, the first committing step of glycolysis. In Aspergillus oryzae (strain ATCC 42149 / RIB 40) (Yellow koji mold), this protein is ATP-dependent 6-phosphofructokinase 2 (pfkB).